Consider the following 277-residue polypeptide: 3-methyl-2-oxobutanoate hydroxymethyltransferase (277 aa).

2 residues coordinate Mg(2+): aspartate 43 and aspartate 82. 3-methyl-2-oxobutanoate contacts are provided by residues 43 to 44 (DS), aspartate 82, and lysine 112. Glutamate 114 contacts Mg(2+). Residue glutamate 181 is the Proton acceptor of the active site.

This sequence belongs to the PanB family. Homodecamer; pentamer of dimers. The cofactor is Mg(2+).

The protein localises to the cytoplasm. It catalyses the reaction 3-methyl-2-oxobutanoate + (6R)-5,10-methylene-5,6,7,8-tetrahydrofolate + H2O = 2-dehydropantoate + (6S)-5,6,7,8-tetrahydrofolate. It functions in the pathway cofactor biosynthesis; (R)-pantothenate biosynthesis; (R)-pantoate from 3-methyl-2-oxobutanoate: step 1/2. Its function is as follows. Catalyzes the reversible reaction in which hydroxymethyl group from 5,10-methylenetetrahydrofolate is transferred onto alpha-ketoisovalerate to form ketopantoate. This chain is 3-methyl-2-oxobutanoate hydroxymethyltransferase, found in Listeria innocua serovar 6a (strain ATCC BAA-680 / CLIP 11262).